A 382-amino-acid polypeptide reads, in one-letter code: MKKVIILGSTGSIGTQTLDVIKNFRENFEIVGLTAYNNVELLSKQIREFNPKVVAVKDEDKANQLRENLKKNVEILTGSKGLQEIVKYDADLVVVAVEGIAGLIPTVTAIQMGKDIALANKEVLVTAGQIVMDLVKKKDISLLPVDSEHSAILQCLRGNDKKEVSRLILTASGGPFRGKKKEDLRKVTVNEALNHPNWKMGKKITIDSATLMNKGFEVIEAKWLFDISEDKIDVIVHPQSIIHSMVEYIDGSVIAQLATADMRIPIHYALNYPTRNYINGMNFLDFSLTTQLTFEKPDLETFRCLSLAYEALKIGGTMTTVLNAADEIAVSLFLNKKIEFLQIAEIIEESMKEHNNIQNPTLDDIINVDEEVKEKIAKKYMR.

Thr-10, Gly-11, Ser-12, Ile-13, Asn-38, and Asn-120 together coordinate NADPH. Lys-121 serves as a coordination point for 1-deoxy-D-xylulose 5-phosphate. Glu-122 contacts NADPH. Asp-146 is a Mn(2+) binding site. 1-deoxy-D-xylulose 5-phosphate-binding residues include Ser-147, Glu-148, Ser-172, and His-195. A Mn(2+)-binding site is contributed by Glu-148. Gly-201 lines the NADPH pocket. 1-deoxy-D-xylulose 5-phosphate-binding residues include Ser-208, Asn-213, Lys-214, and Glu-217. Glu-217 contributes to the Mn(2+) binding site.

Belongs to the DXR family. It depends on Mg(2+) as a cofactor. Mn(2+) is required as a cofactor.

The catalysed reaction is 2-C-methyl-D-erythritol 4-phosphate + NADP(+) = 1-deoxy-D-xylulose 5-phosphate + NADPH + H(+). It participates in isoprenoid biosynthesis; isopentenyl diphosphate biosynthesis via DXP pathway; isopentenyl diphosphate from 1-deoxy-D-xylulose 5-phosphate: step 1/6. In terms of biological role, catalyzes the NADPH-dependent rearrangement and reduction of 1-deoxy-D-xylulose-5-phosphate (DXP) to 2-C-methyl-D-erythritol 4-phosphate (MEP). This chain is 1-deoxy-D-xylulose 5-phosphate reductoisomerase, found in Thermoanaerobacter sp. (strain X514).